A 321-amino-acid polypeptide reads, in one-letter code: MRIGILTAGGDAPGMNAVIRAVVRSAEREGHEVIGIKRGYKGLIEGDFIKLTSRDVGGILDRGGTILLSSRDPRYKKLEYREKAYKNLNEQGIEALIILGGEGTLAGAKLTAEETGIPVIGVPCTIDNDVGGTEYCIGYDTALRNAVDAIDKIRDTASSHERIFIVEVMGRNRGFIAVEAGLATGAELILIPEERFPREQIPEEIEKAKKLGKLHFIIVLAEGYCRAKELEDFLLEKIGDKYGEIRSTVLGHIQRGGIPTHFDRIMGTKFGVVAYESLIAGERSGFVAYEKGKFYIEDFEKAQEYKPIDREAYKLNTRLAI.

Glycine 10 contacts ATP. Residue 20–24 (RAVVR) coordinates ADP. ATP-binding positions include 71–72 (RD) and 101–104 (GEGT). Glutamate 102 is a Mg(2+) binding site. Position 125–127 (125–127 (TID)) interacts with substrate. Catalysis depends on aspartate 127, which acts as the Proton acceptor. Arginine 154 serves as a coordination point for ADP. Residues arginine 162 and 169-171 (MGR) contribute to the substrate site. ADP contacts are provided by residues 185–187 (GAE) and 213–215 (KLH). Substrate-binding positions include glutamate 222, arginine 246, and 252–255 (HIQR).

The protein belongs to the phosphofructokinase type A (PFKA) family. ATP-dependent PFK group I subfamily. Prokaryotic clade 'B1' sub-subfamily. In terms of assembly, homotetramer. The cofactor is Mg(2+).

It is found in the cytoplasm. It carries out the reaction beta-D-fructose 6-phosphate + ATP = beta-D-fructose 1,6-bisphosphate + ADP + H(+). Its pathway is carbohydrate degradation; glycolysis; D-glyceraldehyde 3-phosphate and glycerone phosphate from D-glucose: step 3/4. Its activity is regulated as follows. Allosterically activated by ADP and other diphosphonucleosides, and allosterically inhibited by phosphoenolpyruvate. Its function is as follows. Catalyzes the phosphorylation of D-fructose 6-phosphate to fructose 1,6-bisphosphate by ATP, the first committing step of glycolysis. The chain is ATP-dependent 6-phosphofructokinase from Aquifex aeolicus (strain VF5).